Here is a 265-residue protein sequence, read N- to C-terminus: Mlc titration factor A (265 aa).

Zn(2+) contacts are provided by histidine 111, histidine 148, histidine 152, and glutamate 211.

It belongs to the MtfA family. In terms of assembly, interacts with Mlc. The cofactor is Zn(2+).

Its subcellular location is the cytoplasm. Its function is as follows. Involved in the modulation of the activity of the glucose-phosphotransferase system (glucose-PTS). Interacts with the transcriptional repressor Mlc, preventing its interaction with DNA and leading to the modulation of expression of genes regulated by Mlc, including ptsG, which encodes the PTS system glucose-specific EIICB component. Functionally, shows zinc-dependent metallopeptidase activity. This is Mlc titration factor A from Escherichia coli O9:H4 (strain HS).